Reading from the N-terminus, the 1090-residue chain is Protein unc-13 homolog D (1090 aa).

The 148-residue stretch at 92–239 (EPEEHQQTLQ…FKEARKDKGQ (148 aa)) folds into the C2 1 domain. Ca(2+) contacts are provided by D127 and D133. S150 is subject to Phosphoserine. Positions 206 and 208 each coordinate Ca(2+). An interaction with RAB27A region spans residues 240 to 543 (DDFLGNVVLR…AKRVQDHTTV (304 aa)). Residues 557–677 (FQLYISLKEL…RLALVYCSLI (121 aa)) enclose the MHD1 domain. The MHD2 domain occupies 788–895 (EDAILPLMKF…ASSRELIRKY (108 aa)). One can recognise a C2 2 domain in the interval 910–1035 (ELGAVTVKAS…PGLSGSEEPG (126 aa)). Ca(2+)-binding residues include L940, D941, D947, D1005, D1007, and D1013. Residues 1026-1048 (PGLSGSEEPGEVPQTRLPLTYPA) form a disordered region.

Belongs to the unc-13 family. In terms of assembly, interacts with DOC2A. Interacts with RAB27A. Interacts with RHOG; the interaction increases RhoG affinity to the membrane lipids, targets UNC13D to membrane lipids and facilitates cytotoxic granule (CG) docking to the plasma membrane. The cofactor is Ca(2+). Expressed at high levels in spleen, thymus and leukocytes. Also expressed in lung and placenta, and at very low levels in brain, heart, skeletal muscle and kidney. Expressed in cytotoxic T-lymphocytes (CTL) and mast cells.

It is found in the cytoplasm. The protein resides in the membrane. The protein localises to the late endosome. Its subcellular location is the recycling endosome. It localises to the lysosome. Its function is as follows. Plays a role in cytotoxic granule exocytosis in lymphocytes. Required for both granule maturation and granule docking and priming at the immunologic synapse. Regulates assembly of recycling and late endosomal structures, leading to the formation of an endosomal exocytic compartment that fuses with perforin-containing granules at the immunologic synapse and licences them for exocytosis. Regulates Ca(2+)-dependent secretory lysosome exocytosis in mast cells. This chain is Protein unc-13 homolog D (UNC13D), found in Homo sapiens (Human).